The chain runs to 115 residues: Large ribosomal subunit protein uL22 (115 aa).

This sequence belongs to the universal ribosomal protein uL22 family. In terms of assembly, part of the 50S ribosomal subunit.

In terms of biological role, this protein binds specifically to 23S rRNA; its binding is stimulated by other ribosomal proteins, e.g. L4, L17, and L20. It is important during the early stages of 50S assembly. It makes multiple contacts with different domains of the 23S rRNA in the assembled 50S subunit and ribosome. The globular domain of the protein is located near the polypeptide exit tunnel on the outside of the subunit, while an extended beta-hairpin is found that lines the wall of the exit tunnel in the center of the 70S ribosome. In Endomicrobium trichonymphae, this protein is Large ribosomal subunit protein uL22.